Here is a 356-residue protein sequence, read N- to C-terminus: DNA polymerase IV (356 aa).

Residues 6-187 (IIHIDMDYFF…LDIGDFPGVG (182 aa)) form the UmuC domain. Positions 10 and 105 each coordinate Mg(2+). Glutamate 106 is an active-site residue.

It belongs to the DNA polymerase type-Y family. In terms of assembly, monomer. Mg(2+) serves as cofactor.

Its subcellular location is the cytoplasm. It catalyses the reaction DNA(n) + a 2'-deoxyribonucleoside 5'-triphosphate = DNA(n+1) + diphosphate. In terms of biological role, poorly processive, error-prone DNA polymerase involved in untargeted mutagenesis. Copies undamaged DNA at stalled replication forks, which arise in vivo from mismatched or misaligned primer ends. These misaligned primers can be extended by PolIV. Exhibits no 3'-5' exonuclease (proofreading) activity. May be involved in translesional synthesis, in conjunction with the beta clamp from PolIII. The chain is DNA polymerase IV from Staphylococcus epidermidis (strain ATCC 35984 / DSM 28319 / BCRC 17069 / CCUG 31568 / BM 3577 / RP62A).